Here is a 402-residue protein sequence, read N- to C-terminus: Multidrug resistance protein MdtH (402 aa).

Over Met-1–Lys-12 the chain is Cytoplasmic. A helical membrane pass occupies residues Tyr-13 to Ile-33. At Ser-34 to Glu-98 the chain is on the periplasmic side. A helical transmembrane segment spans residues Pro-99–Phe-116. The Cytoplasmic segment spans residues Asp-117–Ser-138. A helical membrane pass occupies residues Leu-139–Leu-159. Residues Gln-160–Arg-164 lie on the Periplasmic side of the membrane. Residues Leu-165–Leu-185 traverse the membrane as a helical segment. Residues Pro-186–Tyr-213 are Cytoplasmic-facing. Residues Val-214–Met-234 traverse the membrane as a helical segment. Residues Val-235–Ser-243 are Periplasmic-facing. Residues Ala-244 to Ala-264 form a helical membrane-spanning segment. Residues Arg-265 to Arg-276 lie on the Cytoplasmic side of the membrane. A helical transmembrane segment spans residues Leu-277–Leu-297. Residues Gln-298–Gln-299 are Periplasmic-facing. Residues Leu-300–Thr-320 traverse the membrane as a helical segment. Residues Leu-321 to Arg-339 are Cytoplasmic-facing. A helical membrane pass occupies residues Leu-340 to Gly-360. Topologically, residues Lys-361 to Glu-367 are periplasmic. Residues Leu-368–Phe-388 form a helical membrane-spanning segment. Topologically, residues Ser-389–Ala-402 are cytoplasmic.

Belongs to the major facilitator superfamily. DHA1 family. MdtH (TC 2.A.1.2.21) subfamily.

It is found in the cell inner membrane. The polypeptide is Multidrug resistance protein MdtH (Shigella flexneri).